A 67-amino-acid chain; its full sequence is MKLLLLTLTVLLLLSQLTPGGTQRCWNLYGKCRYRCSKKERVYVYCINNKMCCVKPKYQPKERWWPF.

An N-terminal signal peptide occupies residues 1–20 (MKLLLLTLTVLLLLSQLTPG). Intrachain disulfides connect cysteine 25–cysteine 52, cysteine 32–cysteine 46, and cysteine 36–cysteine 53.

This sequence belongs to the beta-defensin family.

Its subcellular location is the secreted. Functionally, has antibacterial activity. The polypeptide is Beta-defensin 123 (DEFB123) (Gorilla gorilla gorilla (Western lowland gorilla)).